The following is a 224-amino-acid chain: UPF0758 protein Pfl01_5539 (224 aa).

Residues 102–224 (ALENPQVVRD…PLSMAECGWM (123 aa)) form the MPN domain. Residues histidine 173, histidine 175, and aspartate 186 each coordinate Zn(2+). The JAMM motif motif lies at 173-186 (HNHPSGNSDPSQAD).

The protein belongs to the UPF0758 family.

This chain is UPF0758 protein Pfl01_5539, found in Pseudomonas fluorescens (strain Pf0-1).